A 223-amino-acid polypeptide reads, in one-letter code: Endonuclease NucS (223 aa).

It belongs to the NucS endonuclease family.

Its subcellular location is the cytoplasm. In terms of biological role, cleaves both 3' and 5' ssDNA extremities of branched DNA structures. In Streptomyces griseus subsp. griseus (strain JCM 4626 / CBS 651.72 / NBRC 13350 / KCC S-0626 / ISP 5235), this protein is Endonuclease NucS.